Consider the following 376-residue polypeptide: UDP-N-acetylglucosamine 2-epimerase (376 aa).

Substrate-binding positions include Arg10, Lys15, Asp95, Glu117, His213, Gln271, Phe276, Ser290 to Gly292, Glu296, and Arg313.

The protein belongs to the UDP-N-acetylglucosamine 2-epimerase family. In terms of assembly, homodimer.

The protein localises to the cytoplasm. The catalysed reaction is UDP-N-acetyl-alpha-D-glucosamine = UDP-N-acetyl-alpha-D-mannosamine. It participates in bacterial outer membrane biogenesis; enterobacterial common antigen biosynthesis. Catalyzes the reversible epimerization at C-2 of UDP-N-acetylglucosamine (UDP-GlcNAc) and thereby provides bacteria with UDP-N-acetylmannosamine (UDP-ManNAc), the activated donor of ManNAc residues. This Salmonella typhimurium (strain LT2 / SGSC1412 / ATCC 700720) protein is UDP-N-acetylglucosamine 2-epimerase.